Reading from the N-terminus, the 376-residue chain is MKILVDENMPYVEPLFGDLGDIIPVNGRTLTAEQVRDADVLLVRSVTKVNAELLSGNNKLKFVGSATIGTDHVDLAYLAERNIPFSNAPGCNATAVGEFAFIAMLELAQRFNSPLKGKVVGIVGAGNTGTATAKCLQAYGIKVLLNDPIKAAEGDPRSFVSLDTITAQADIISLHVPITRTGEHKTKHLFDEARLKALKPNTWLVNCCRGDVIDNQALIKVKRQRDDLKLVLDVWEGEPTPLPELVPLAEFATPHIAGYSLEGKARGTFMLYQKLCQLLNITADKSLLDLLPTFNIKAVELATAPNEKALLQLARFVYDLRDDDKMFRNTFLNENGFDTMRKNHQHRREFSALALAYDGQSEVDWLSNLGFSGVGQ.

Positions 45 and 67 each coordinate substrate. Asp-147 serves as a coordination point for NAD(+). Residue Arg-209 is part of the active site. Asp-233 is a binding site for NAD(+). Glu-238 is a catalytic residue. Residue His-255 is the Proton donor of the active site. Gly-258 lines the NAD(+) pocket. Tyr-259 is a substrate binding site.

This sequence belongs to the D-isomer specific 2-hydroxyacid dehydrogenase family. PdxB subfamily. As to quaternary structure, homodimer.

The protein localises to the cytoplasm. It carries out the reaction 4-phospho-D-erythronate + NAD(+) = (R)-3-hydroxy-2-oxo-4-phosphooxybutanoate + NADH + H(+). The protein operates within cofactor biosynthesis; pyridoxine 5'-phosphate biosynthesis; pyridoxine 5'-phosphate from D-erythrose 4-phosphate: step 2/5. Its function is as follows. Catalyzes the oxidation of erythronate-4-phosphate to 3-hydroxy-2-oxo-4-phosphonooxybutanoate. The protein is Erythronate-4-phosphate dehydrogenase of Shewanella baltica (strain OS185).